The primary structure comprises 323 residues: C-type lectin domain family 11 member A (323 aa).

The N-terminal stretch at 1–21 is a signal peptide; the sequence is MQAAWLLGALVVPQLLGFGHG. Disordered regions lie at residues 55–106 and 272–295; these read LGLP…TPED and LGAQ…TLEN. A Cell attachment site motif is present at residues 61-63; sequence RGD. Acidic residues predominate over residues 74–90; sequence EDWEMEEDQGEEEEEEA. Residues 183 to 320 form the C-type lectin domain; it reads LGHKCFLLSR…CQRRLYYVCE (138 aa). 2 disulfide bridges follow: Cys-204/Cys-319 and Cys-296/Cys-311.

O-glycosylated. Probably sulfated on the O-glycans. Expressed in skeletal tissues including bone marrow, chondrocytes, primary ossification center-associated cells, the perichondrium and periosteum. Lower levels of expression were detected in spleen, thymus, appendix and fetal liver.

Its subcellular location is the cytoplasm. It is found in the secreted. In terms of biological role, promotes osteogenesis by stimulating the differentiation of mesenchymal progenitors into mature osteoblasts. Important for repair and maintenance of adult bone. The polypeptide is C-type lectin domain family 11 member A (CLEC11A) (Homo sapiens (Human)).